We begin with the raw amino-acid sequence, 329 residues long: Probable cell division protein WhiA (329 aa).

The segment at residues 275-308 (SLEELGALADPPLTKDAVAGRIRRLLAMADKRAQ) is a DNA-binding region (H-T-H motif).

The protein belongs to the WhiA family.

Functionally, involved in cell division and chromosome segregation. The protein is Probable cell division protein WhiA of Streptomyces avermitilis (strain ATCC 31267 / DSM 46492 / JCM 5070 / NBRC 14893 / NCIMB 12804 / NRRL 8165 / MA-4680).